Reading from the N-terminus, the 142-residue chain is Hemoglobin subunit alpha-1 (142 aa).

Position 1 is an N-acetylserine (Ser-1). In terms of domain architecture, Globin spans 1-142 (SLSDKDKAAV…VALALAERYR (142 aa)). His-59 serves as a coordination point for O2. Position 88 (His-88) interacts with heme b.

It belongs to the globin family. As to quaternary structure, hb1 is a heterotetramer of two alpha-2 chains and two beta chains, while Hb2 is a heterotetramer of two alpha-2 chains and two beta chains. As to expression, red blood cells.

Functionally, involved in oxygen transport from gills to the various peripheral tissues. The protein is Hemoglobin subunit alpha-1 (hba1) of Notothenia angustata (Rockcod).